The chain runs to 265 residues: MKPAMETAAEENTEQSQKRKGCFECCIKCLGGVPYASLVATILCFSGVALFCGCGHVALAGTVAILEQHFSTNASDHALLSEVIQLMQYVIYGIASFFFLYVIILLAEGFYTTSAVKELHGEFKTTACGRCISGMFVFLTYVLGVAWLGVFGFSAVPVFMFYNIWSTCEVIKSPQTNGTTGVEQICVDIRQYGIIPWNAFPGKICGSALENICNTNEFYMSYHLFIVACAGAGATVIALLIYMMATTYNYAVLKFKSREDCCTKF.

A helical transmembrane segment spans residues 31–51; that stretch reads GGVPYASLVATILCFSGVALF. Residue Asn73 is glycosylated (N-linked (GlcNAc...) asparagine). The next 2 helical transmembrane spans lie at 90 to 110 and 136 to 156; these read VIYG…AEGF and FVFL…FSAV. Asn177 is a glycosylation site (N-linked (GlcNAc...) asparagine). A helical transmembrane segment spans residues 224 to 244; the sequence is LFIVACAGAGATVIALLIYMM. Residue Ser257 is modified to Phosphoserine.

The protein belongs to the myelin proteolipid protein family. Interacts with SERT.

The protein localises to the membrane. The protein resides in the cell membrane. Its function is as follows. May be involved in neural development. Involved in regulation of osteoblast function and bone formation. Involved in matrix vesicle release by osteoblasts; this function seems to involve maintenance of the actin cytoskeleton. May be involved in cellular trafficking of SERT and thereby in regulation of serotonin uptake. In Pongo abelii (Sumatran orangutan), this protein is Neuronal membrane glycoprotein M6-b (GPM6B).